We begin with the raw amino-acid sequence, 363 residues long: Ribosomal RNA large subunit methyltransferase M (363 aa).

S-adenosyl-L-methionine-binding positions include Ser190, 223 to 226 (CPGG), Asp242, Asp262, and Asp279. Lys308 (proton acceptor) is an active-site residue.

This sequence belongs to the class I-like SAM-binding methyltransferase superfamily. RNA methyltransferase RlmE family. RlmM subfamily. As to quaternary structure, monomer.

It localises to the cytoplasm. The enzyme catalyses cytidine(2498) in 23S rRNA + S-adenosyl-L-methionine = 2'-O-methylcytidine(2498) in 23S rRNA + S-adenosyl-L-homocysteine + H(+). Functionally, catalyzes the 2'-O-methylation at nucleotide C2498 in 23S rRNA. This Vibrio atlanticus (strain LGP32) (Vibrio splendidus (strain Mel32)) protein is Ribosomal RNA large subunit methyltransferase M.